The primary structure comprises 236 residues: Probable 2-phosphosulfolactate phosphatase (236 aa).

Belongs to the ComB family. Requires Mg(2+) as cofactor.

The enzyme catalyses (2R)-O-phospho-3-sulfolactate + H2O = (2R)-3-sulfolactate + phosphate. This is Probable 2-phosphosulfolactate phosphatase from Gloeobacter violaceus (strain ATCC 29082 / PCC 7421).